A 131-amino-acid chain; its full sequence is Holo-[acyl-carrier-protein] synthase (131 aa).

Residues Asp-8 and Glu-62 each contribute to the Mg(2+) site.

The protein belongs to the P-Pant transferase superfamily. AcpS family. Requires Mg(2+) as cofactor.

The protein localises to the cytoplasm. It catalyses the reaction apo-[ACP] + CoA = holo-[ACP] + adenosine 3',5'-bisphosphate + H(+). Its function is as follows. Transfers the 4'-phosphopantetheine moiety from coenzyme A to a Ser of acyl-carrier-protein. This chain is Holo-[acyl-carrier-protein] synthase, found in Delftia acidovorans (strain DSM 14801 / SPH-1).